Here is a 286-residue protein sequence, read N- to C-terminus: Protein PXR1 (286 aa).

The tract at residues 1–20 is disordered; the sequence is MGLAGTKVKQRFGLDPRNTS. Residues 25 to 71 form the G-patch domain; it reads KSRFGHRYLESMGWAPGKGLGLVEHATTTHVKVSVKDDTVGLGAKLA. The segment at 148–255 is disordered; it reads EDESEVNFKS…PRKHDQISNV (108 aa). A compositionally biased stretch (basic and acidic residues) spans 168–198; the sequence is PSRDSTSHAKRMRGDESKKSTRDQSKQERKE. Positions 199–230 are enriched in basic residues; it reads KKIKTEKKEKKEKKEKKEKKEKKEKKEKKEKK.

Belongs to the PINX1 family.

The protein localises to the nucleus. The protein resides in the nucleolus. Functionally, involved in rRNA-processing at A0, A1 and A2 sites and negatively regulates telomerase. The sequence is that of Protein PXR1 (PXR1) from Meyerozyma guilliermondii (strain ATCC 6260 / CBS 566 / DSM 6381 / JCM 1539 / NBRC 10279 / NRRL Y-324) (Yeast).